A 284-amino-acid chain; its full sequence is tRNA uridine(34) hydroxylase (284 aa).

Positions 132-226 constitute a Rhodanese domain; it reads TGRPVVMLDT…YFEEVGGAHY (95 aa). The active-site Cysteine persulfide intermediate is C186.

It belongs to the TrhO family.

It carries out the reaction uridine(34) in tRNA + AH2 + O2 = 5-hydroxyuridine(34) in tRNA + A + H2O. Its function is as follows. Catalyzes oxygen-dependent 5-hydroxyuridine (ho5U) modification at position 34 in tRNAs. The polypeptide is tRNA uridine(34) hydroxylase (Burkholderia cenocepacia (strain ATCC BAA-245 / DSM 16553 / LMG 16656 / NCTC 13227 / J2315 / CF5610) (Burkholderia cepacia (strain J2315))).